We begin with the raw amino-acid sequence, 291 residues long: Small ribosomal subunit biogenesis GTPase RsgA (291 aa).

Residues 63–221 (KNELKRPPVS…IADTPGFSAL (159 aa)) enclose the CP-type G domain. GTP contacts are provided by residues 112-115 (TKKD) and 164-172 (GQSGVGKST). Zn(2+) is bound by residues cysteine 245, cysteine 250, histidine 252, and cysteine 258.

It belongs to the TRAFAC class YlqF/YawG GTPase family. RsgA subfamily. As to quaternary structure, monomer. Associates with 30S ribosomal subunit, binds 16S rRNA. The cofactor is Zn(2+).

It is found in the cytoplasm. In terms of biological role, one of several proteins that assist in the late maturation steps of the functional core of the 30S ribosomal subunit. Helps release RbfA from mature subunits. May play a role in the assembly of ribosomal proteins into the subunit. Circularly permuted GTPase that catalyzes slow GTP hydrolysis, GTPase activity is stimulated by the 30S ribosomal subunit. The protein is Small ribosomal subunit biogenesis GTPase RsgA of Staphylococcus aureus (strain MRSA252).